We begin with the raw amino-acid sequence, 413 residues long: MAEHSFDVNEVIKDFPILDQKVNGKRLAYLDSTATSQTPVQVLNVLEDYYKRYNSNVHRGVHTLGSLATDGYENARETVRRFINAKYFEEIIFTRGTTASINLVAHSYGDANVEEGDEIVVTEMEHHANIVPWQQLAKRKNATLKFIPMTADGELNIEDIKQTINDKTKIVAIAHISNVLGTINDVKTIAEIAHQHGAIISVDGAQAAPHMKLDMQEMNADFYSFSGHKMLGPTGIGVLFGKRELLQKMEPIEFGGDMIDFVSKYDATWADLPTKFEAGTPLIAQAIGLAEAIRYLERIGFDAIHKYEQELTIYAYEQMSAIEGIEIYGPPKDRRAGVITFNLQDVHPHDVATAVDTEGVAVRAGHHCAQPLMKWLNVSSTARASFYIYNTKEDVDQLINALKQTKEFFSYEF.

N6-(pyridoxal phosphate)lysine is present on Lys-229. Residue Cys-368 is the Cysteine persulfide intermediate of the active site.

This sequence belongs to the class-V pyridoxal-phosphate-dependent aminotransferase family. Csd subfamily. The cofactor is pyridoxal 5'-phosphate.

It carries out the reaction (sulfur carrier)-H + L-cysteine = (sulfur carrier)-SH + L-alanine. In terms of biological role, catalyzes the removal of elemental sulfur and selenium atoms from L-cysteine, L-cystine, L-selenocysteine, and L-selenocystine to produce L-alanine. This is Probable cysteine desulfurase (csd) from Staphylococcus aureus (strain COL).